Here is a 112-residue protein sequence, read N- to C-terminus: Small ribosomal subunit protein bS6 (112 aa).

This sequence belongs to the bacterial ribosomal protein bS6 family.

Its function is as follows. Binds together with bS18 to 16S ribosomal RNA. The sequence is that of Small ribosomal subunit protein bS6 from Hyphomonas neptunium (strain ATCC 15444).